The following is a 466-amino-acid chain: Cytochrome P450 85A (466 aa).

Residues 2 to 22 (ALFMAILGVLVLLLCLCSALL) traverse the membrane as a helical segment. Position 414 (C414) interacts with heme.

It belongs to the cytochrome P450 family. Heme is required as a cofactor.

It localises to the membrane. In terms of biological role, catalyzes the C6-oxidation step in brassinosteroids biosynthesis. The protein is Cytochrome P450 85A of Phaseolus vulgaris (Kidney bean).